A 196-amino-acid chain; its full sequence is Histone H1.0-B (196 aa).

Disordered regions lie at residues 1–29 and 86–196; these read MAEN…PKYS and GVGA…GRKK. Residues 24 to 97 enclose the H15 domain; it reads DHPKYSDMIL…GASGSFRLAK (74 aa). Residues 104–196 show a composition bias toward basic residues; it reads PAKKPKKEIK…ASPKKSGRKK (93 aa).

This sequence belongs to the histone H1/H5 family.

The protein resides in the nucleus. The protein localises to the chromosome. Functionally, histones H1 are necessary for the condensation of nucleosome chains into higher-order structures. The histones H1.0 are found in cells that are in terminal stages of differentiation or that have low rates of cell division. The protein is Histone H1.0-B (h1-0-b) of Xenopus laevis (African clawed frog).